A 1228-amino-acid chain; its full sequence is Apical endosomal glycoprotein (1228 aa).

The first 21 residues, 1–21 (MCLPSHLLSTWVLFMAAQSLG), serve as a signal peptide directing secretion. Residues 23 to 1159 (TWLPNHCRSP…GEVAAPVSVP (1137 aa)) are Extracellular-facing. An LDL-receptor class A 1; truncated domain is found at 28–49 (HCRSPIKAVCNFVCDCGDCSDE). Residues 65–223 (FTCNFEQDSC…DDVEFRDCGL (159 aa)) form the MAM 1 domain. The N-linked (GlcNAc...) asparagine glycan is linked to Asn204. The region spanning 229 to 267 (RCPLGHHHCQNKACVEPHQLCDGEDNCGDRSDEDPLICS) is the LDL-receptor class A 2 domain. Disulfide bonds link Cys230–Cys242, Cys237–Cys255, and Cys249–Cys266. The 157-residue stretch at 270-426 (MATDFETGLG…DLIMSSHCML (157 aa)) folds into the MAM 2 domain. Residues Asn290 and Asn340 are each glycosylated (N-linked (GlcNAc...) asparagine). The 36-residue stretch at 457–492 (TCEPGHLSCGDLCVPPEQLCDFQKHCAEGEDEHKCG) folds into the LDL-receptor class A 3 domain. Intrachain disulfides connect Cys458–Cys469, Cys465–Cys482, and Cys476–Cys491. 4 MAM domains span residues 492–649 (GTTD…DCNP), 659–815 (LSCN…PCWA), 817–975 (KSCS…PCPQ), and 977–1144 (GSCD…QCKQ). Asn641 carries an N-linked (GlcNAc...) asparagine glycan. An N-linked (GlcNAc...) asparagine glycan is attached at Asn841. The chain crosses the membrane as a helical span at residues 1160–1180 (VAVGGALLFFMFLVLMGLGGW). The Cytoplasmic segment spans residues 1181–1228 (HWLQKQHCPGQRSTDAAASGFANILFNADHVTLPESITSNPQSPPDLA).

The protein localises to the membrane. Functionally, probably involved in the sorting and selective transport of receptors and ligands across polarized epithelia. This chain is Apical endosomal glycoprotein, found in Mus musculus (Mouse).